We begin with the raw amino-acid sequence, 369 residues long: MLAKKQIQGLPPYAPGKPIEDVKREYGLETVIKMASNENPYGASPAVAKAIADGASKTFLYPDGYGTALRKALAAKHKVDEGQLILGNGTDEVIQLLCRSFLTPETNTVMATPSFSQYKLNATIEGATIKEITVKEDGSHDLDAMLAAIDDQTRIVWVCNPNNPNGVALGEAELKTFLDAVPTTCLVVVDEAYYEYVELDDFPNSVALLNAYPQLVVLRTFSKAYGLAGLRVGYGISQREIARQIEPVRLPFNNNILAHTAALAALEDEAFIAACKQKNSVEKAKLRAFFEARGMFVFPSETNFLLVETGIPGDVVFQAFLENGFILRSGEALGYPTAIRISIGNEAENDAFIEKAPEILDQLRASLGA.

Lysine 223 is modified (N6-(pyridoxal phosphate)lysine).

It belongs to the class-II pyridoxal-phosphate-dependent aminotransferase family. Histidinol-phosphate aminotransferase subfamily. As to quaternary structure, homodimer. Pyridoxal 5'-phosphate is required as a cofactor.

It carries out the reaction L-histidinol phosphate + 2-oxoglutarate = 3-(imidazol-4-yl)-2-oxopropyl phosphate + L-glutamate. Its pathway is amino-acid biosynthesis; L-histidine biosynthesis; L-histidine from 5-phospho-alpha-D-ribose 1-diphosphate: step 7/9. The protein is Histidinol-phosphate aminotransferase of Shouchella clausii (strain KSM-K16) (Alkalihalobacillus clausii).